Reading from the N-terminus, the 376-residue chain is Hydroxylysine kinase (376 aa).

Residue Asp-229 is the Proton acceptor of the active site.

It belongs to the aminoglycoside phosphotransferase family.

It localises to the cytoplasm. It catalyses the reaction (5R)-5-hydroxy-L-lysine + GTP = (5R)-5-phosphooxy-L-lysine + GDP + H(+). Catalyzes the GTP-dependent phosphorylation of 5-hydroxy-L-lysine. The sequence is that of Hydroxylysine kinase (HYKK) from Bos taurus (Bovine).